The sequence spans 247 residues: Adenosylcobinamide-GDP ribazoletransferase (247 aa).

A run of 5 helical transmembrane segments spans residues 34-54 (IVMF…IFIL), 59-79 (CGIP…TGGF), 113-133 (GGLA…ELAL), 138-158 (VLAA…LLMY), and 194-214 (VLLP…AIFI).

It belongs to the CobS family. Mg(2+) is required as a cofactor.

The protein resides in the cell inner membrane. It carries out the reaction alpha-ribazole + adenosylcob(III)inamide-GDP = adenosylcob(III)alamin + GMP + H(+). The enzyme catalyses alpha-ribazole 5'-phosphate + adenosylcob(III)inamide-GDP = adenosylcob(III)alamin 5'-phosphate + GMP + H(+). It participates in cofactor biosynthesis; adenosylcobalamin biosynthesis; adenosylcobalamin from cob(II)yrinate a,c-diamide: step 7/7. Functionally, joins adenosylcobinamide-GDP and alpha-ribazole to generate adenosylcobalamin (Ado-cobalamin). Also synthesizes adenosylcobalamin 5'-phosphate from adenosylcobinamide-GDP and alpha-ribazole 5'-phosphate. In Salmonella arizonae (strain ATCC BAA-731 / CDC346-86 / RSK2980), this protein is Adenosylcobinamide-GDP ribazoletransferase.